A 454-amino-acid chain; its full sequence is MELATRYQIPKEVADIFNAPSDDEEFVGFRDDVPMETLSSEESCDSFDSLESGKQQDVRFHSKYFTEELRRIFIEDTDSETEDFAGFTQSDLNGKTNPEVMVVESDLSDDGKASLVSEEEEDEEEDKATPRRSRSRRSSIGLRVAFQFPTKKLANKPDKNSSSEQLFSSARLQNEKKTILERKKDCRQVIQREDSTSESEDDSRDESQESSDALLKRTMNIKENKAMLAQLLAELNSMPDFFPVRTPTSASRKKTVRRAFSEGQITRRMNPTRSARPPEKFALENFTVSAAKFAEEFYSFRRRKTIGGKCREYRRRHRISSFRPVEDITEEDLENVAITVRDKIYDKVLGNTCHQCRQKTIDTKTVCRNQGCCGVRGQFCGPCLRNRYGEDVRSALLDPDWVCPPCRGICNCSYCRKRDGRCATGILIHLAKFYGYDNVKEYLESLQKELVEDN.

An Integrase domain-binding motif 1 (IBM1) motif is present at residues 9 to 33 (IPKEVADIFNAPSDDEEFVGFRDDV). The residue at position 21 (serine 21) is a Phosphoserine. The Integrase domain-binding motif 2 (IBM2) motif lies at 65 to 91 (FTEELRRIFIEDTDSETEDFAGFTQSD). Threonine 77 bears the Phosphothreonine mark. Serine 79 is modified (phosphoserine). A phosphothreonine mark is found at threonine 81 and threonine 88. 2 disordered regions span residues 103 to 169 (VESD…LFSS) and 188 to 213 (QVIQ…SSDA). A phosphoserine mark is found at serine 105, serine 108, serine 117, serine 138, serine 139, serine 162, serine 195, and serine 197. Over residues 117–126 (SEEEEDEEED) the composition is skewed to acidic residues. The MYC-binding stretch occupies residues 213–235 (ALLKRTMNIKENKAMLAQLLAEL). Residues lysine 222 and lysine 225 each participate in a glycyl lysine isopeptide (Lys-Gly) (interchain with G-Cter in SUMO2) cross-link. Position 261 is a phosphoserine (serine 261).

As to quaternary structure, interacts with MYC. Interacts (via IBM motifs) with PSIP1 (via IBD domain); phosphorylation increases its affinity for PSIP1. Post-translationally, phosphorylation increases its interaction with PSIP1. In terms of tissue distribution, ubiquitous. Overexpressed in medulloblastoma.

It localises to the cytoplasm. Its subcellular location is the nucleus. Plays a role in transcriptional regulation as a repressor that inhibits monoamine oxidase A (MAOA) activity and gene expression by binding to the promoter. Plays an important oncogenic role in mediating the full transforming effect of MYC in medulloblastoma cells. Involved in apoptotic signaling pathways; May act downstream of P38-kinase and BCL-2, but upstream of CASP3/caspase-3 as well as CCND1/cyclin D1 and E2F1. In Homo sapiens (Human), this protein is Cell division cycle-associated 7-like protein (CDCA7L).